The primary structure comprises 287 residues: Protease HtpX (287 aa).

A run of 2 helical transmembrane segments spans residues 4-24 (IFLL…VMSI) and 33-53 (GGLL…SLAI). Residue H139 coordinates Zn(2+). Residue E140 is part of the active site. Residue H143 coordinates Zn(2+). Transmembrane regions (helical) follow at residues 154–174 (LIQG…ASII) and 195–215 (AVVF…VAYF). E220 is a Zn(2+) binding site.

This sequence belongs to the peptidase M48B family. It depends on Zn(2+) as a cofactor.

Its subcellular location is the cell inner membrane. The chain is Protease HtpX from Shewanella loihica (strain ATCC BAA-1088 / PV-4).